Consider the following 176-residue polypeptide: Inner membrane-spanning protein YciB (176 aa).

6 consecutive transmembrane segments (helical) span residues 3-23, 24-44, 49-69, 81-101, 121-141, and 149-169; these read FLFDLFPIILFFAAFKVWGIF, TATAVAIVATLAQVAWVAFRH, TMLWVSLGVIVVFGGATLVLH, LYWLFAIGLLAARYAFGNNLI, VAWALFFAVLGVANLYVVHNF, and FKLFGTTGAMVVFIILQSLWL.

It belongs to the YciB family.

It is found in the cell inner membrane. Its function is as follows. Plays a role in cell envelope biogenesis, maintenance of cell envelope integrity and membrane homeostasis. This Burkholderia lata (strain ATCC 17760 / DSM 23089 / LMG 22485 / NCIMB 9086 / R18194 / 383) protein is Inner membrane-spanning protein YciB.